We begin with the raw amino-acid sequence, 396 residues long: Phosphoglycerate kinase (396 aa).

Residues 22–24 (DLN), Arg-37, 60–63 (HFGR), Arg-118, and Arg-151 each bind substrate. ATP is bound by residues Lys-201, Glu-323, and 353 to 356 (GGDT).

Belongs to the phosphoglycerate kinase family. Monomer.

It localises to the cytoplasm. The catalysed reaction is (2R)-3-phosphoglycerate + ATP = (2R)-3-phospho-glyceroyl phosphate + ADP. Its pathway is carbohydrate degradation; glycolysis; pyruvate from D-glyceraldehyde 3-phosphate: step 2/5. This is Phosphoglycerate kinase from Xanthobacter autotrophicus (strain ATCC BAA-1158 / Py2).